The chain runs to 353 residues: Protein disulfide isomerase CRELD2 (353 aa).

Residues methionine 1–alanine 24 form the signal peptide. The CXXC motif lies at cysteine 31–cysteine 34. 4 disulfide bridges follow: cysteine 31-cysteine 34, cysteine 140-cysteine 154, cysteine 148-cysteine 166, and cysteine 168-cysteine 177. An EGF-like 1 domain is found at aspartate 136 to threonine 178. One copy of the FU 1 repeat lies at histidine 193–proline 240. An N-linked (GlcNAc...) asparagine glycan is attached at asparagine 251. An FU 2 repeat occupies serine 253–valine 302. Residues cysteine 263 to cysteine 266 carry the CXXC motif. Disulfide bonds link cysteine 263-cysteine 266, cysteine 294-cysteine 308, cysteine 301-cysteine 317, and cysteine 319-cysteine 330. In terms of domain architecture, EGF-like 2; calcium-binding spans aspartate 290–valine 331. The tract at residues proline 332 to leucine 353 is disordered. Over residues glutamate 342–leucine 353 the composition is skewed to polar residues.

This sequence belongs to the CRELD family. As to quaternary structure, interacts with CHRNA4. Component of a complex containing at least CRELD2, MANF, MATN3 and PDIA4. As to expression, ubiquitously expressed. Highly expressed in skeletal muscle, heart, liver, kidney and placenta.

Its subcellular location is the endoplasmic reticulum. It carries out the reaction Catalyzes the rearrangement of -S-S- bonds in proteins.. In terms of biological role, protein disulfide isomerase. Might play a role in the unfolded protein response. May regulate transport of alpha4-beta2 neuronal acetylcholine receptor. This chain is Protein disulfide isomerase CRELD2 (CRELD2), found in Homo sapiens (Human).